Consider the following 296-residue polypeptide: MTITIIAPPQADAAAPAPGNRPGVAHIDPNMKLVTGTFCSASEDWFEEPLERGLRLILVQSGQLRCRIPGQPEHLIEGPSLCTIANDGDFTSAQIYGTDKPLRYTIVQLGVEALDSRLGWLPEQLIRRPGGDPRIMSCPAPRAMQALASQIATCQMLGPTRDLYLGGKALELAALSAQFLSGEGRPVEEPRITCSEVERIHAARDLLVGALQEPPSLDTLASRVGMNPRKLTAGFRKVFGASVFGYLQEYRLREAHRMLCDEEANVSTVAYRVGYSPAHFSIAFRKRYGISPSEIR.

Positions 201-296 (HAARDLLVGA…RYGISPSEIR (96 aa)) constitute an HTH araC/xylS-type domain. 2 consecutive DNA-binding regions (H-T-H motif) follow at residues 218-239 (DTLASRVGMNPRKLTAGFRKVF) and 266-288 (VSTVAYRVGYSPAHFSIAFRKRY).

In terms of biological role, positive activator of the genes for pyochelin and ferripyochelin receptors. The protein is Regulatory protein PchR (pchR) of Pseudomonas aeruginosa (strain ATCC 15692 / DSM 22644 / CIP 104116 / JCM 14847 / LMG 12228 / 1C / PRS 101 / PAO1).